A 494-amino-acid chain; its full sequence is UDP-N-acetylmuramoyl-L-alanyl-D-glutamate--L-lysine ligase (494 aa).

Residue S30 participates in UDP-N-acetyl-alpha-D-muramoyl-L-alanyl-D-glutamate binding. Position 110–116 (110–116 (GTNGKTS)) interacts with ATP. Residues 152 to 153 (TT), S179, and R187 contribute to the UDP-N-acetyl-alpha-D-muramoyl-L-alanyl-D-glutamate site. Residue K219 is modified to N6-carboxylysine. Residues 406–409 (DNPA) carry the L-lysine recognition motif motif.

Belongs to the MurCDEF family. MurE subfamily. Carboxylation is probably crucial for Mg(2+) binding and, consequently, for the gamma-phosphate positioning of ATP.

The protein localises to the cytoplasm. The enzyme catalyses UDP-N-acetyl-alpha-D-muramoyl-L-alanyl-D-glutamate + L-lysine + ATP = UDP-N-acetyl-alpha-D-muramoyl-L-alanyl-gamma-D-glutamyl-L-lysine + ADP + phosphate + H(+). It functions in the pathway cell wall biogenesis; peptidoglycan biosynthesis. Functionally, catalyzes the addition of L-lysine to the nucleotide precursor UDP-N-acetylmuramoyl-L-alanyl-D-glutamate (UMAG) in the biosynthesis of bacterial cell-wall peptidoglycan. The chain is UDP-N-acetylmuramoyl-L-alanyl-D-glutamate--L-lysine ligase from Staphylococcus epidermidis (strain ATCC 35984 / DSM 28319 / BCRC 17069 / CCUG 31568 / BM 3577 / RP62A).